The chain runs to 180 residues: GTP cyclohydrolase 1 (180 aa).

Zn(2+) is bound by residues C71, H74, and C142.

The protein belongs to the GTP cyclohydrolase I family. In terms of assembly, homomer.

It carries out the reaction GTP + H2O = 7,8-dihydroneopterin 3'-triphosphate + formate + H(+). It participates in cofactor biosynthesis; 7,8-dihydroneopterin triphosphate biosynthesis; 7,8-dihydroneopterin triphosphate from GTP: step 1/1. In Helicobacter pylori (strain G27), this protein is GTP cyclohydrolase 1.